The sequence spans 490 residues: MDPVVVLVLCLSCLLLLSLWKQSHGGGKLPPGPTPLPILGNILQIDFKDISKSLQNLSKVYGNVFTVYMGMKPTVVMYGYEAVKEALVDLGEEFSGRNLSPINKKVNKGLGVIFSNGKRWKEIRRFSLMTLRNFGMGKRSIEDRVQEEARCLVEELRKTNGSPCDPTFILGAAPCNVICSVIFQNRFDYKDETFLNLMGKFNENFRILNSPWLQVCNIFPILMDYLPGTHKTVFENFDYVRNFVLEKTKEHQESLDINNPRDFIDCFLIKMKQEKHNQQSEFTIENLMATVTDVFAAGTETTSTTLRYGLLLLMKHPEVTAKVQEEIERVIGRHRSPCMQDRSRMPYTDATVHEIQRYINLVPNNVPHATTCNVKFRNYFIPKGTAVLTSLTSVLHDNQEFLKPDKFDPGHFLDASGNFKKSDYFMPFSTGKRVCMGEALARMELFLFLTAILQNFTLKPLVDPKDIDTTPLVSGARSCATLYQLSFIPA.

Cys435 contacts heme.

This sequence belongs to the cytochrome P450 family. Requires heme as cofactor.

The protein localises to the endoplasmic reticulum membrane. It is found in the microsome membrane. It carries out the reaction an organic molecule + reduced [NADPH--hemoprotein reductase] + O2 = an alcohol + oxidized [NADPH--hemoprotein reductase] + H2O + H(+). Its function is as follows. Cytochromes P450 are a group of heme-thiolate monooxygenases. In liver microsomes, this enzyme is involved in an NADPH-dependent electron transport pathway. It oxidizes a variety of structurally unrelated compounds, including steroids, fatty acids, and xenobiotics. This Oryctolagus cuniculus (Rabbit) protein is Cytochrome P450 2C14 (CYP2C14).